Consider the following 384-residue polypeptide: NADH-quinone oxidoreductase subunit D 2 (384 aa).

This sequence belongs to the complex I 49 kDa subunit family. As to quaternary structure, NDH-1 is composed of 14 different subunits. Subunits NuoB, C, D, E, F, and G constitute the peripheral sector of the complex.

It is found in the cell membrane. It carries out the reaction a quinone + NADH + 5 H(+)(in) = a quinol + NAD(+) + 4 H(+)(out). Its function is as follows. NDH-1 shuttles electrons from NADH, via FMN and iron-sulfur (Fe-S) centers, to quinones in the respiratory chain. The immediate electron acceptor for the enzyme in this species is believed to be a menaquinone. Couples the redox reaction to proton translocation (for every two electrons transferred, four hydrogen ions are translocated across the cytoplasmic membrane), and thus conserves the redox energy in a proton gradient. The sequence is that of NADH-quinone oxidoreductase subunit D 2 from Symbiobacterium thermophilum (strain DSM 24528 / JCM 14929 / IAM 14863 / T).